We begin with the raw amino-acid sequence, 35 residues long: Tamulustoxin (35 aa).

Intrachain disulfides connect C2–C22, C7–C31, and C11–C33.

In terms of tissue distribution, expressed by the venom gland.

It is found in the secreted. Functionally, blocks Kv1.6/KCNA6 potassium channels. The sequence is that of Tamulustoxin from Hottentotta tamulus (Eastern Indian scorpion).